We begin with the raw amino-acid sequence, 327 residues long: Aldo-keto reductase family 1 member A1 (327 aa).

Residues 13–22 (GQKIPLIGLG), Thr23, Trp24, and Asp47 each bind NADP(+). The active-site Proton donor is the Tyr52. Residues Ser164, Asn165, Ser213, Leu215, Ser217, Lys265, Ser266, Val267, Thr268, Arg271, Gln274, and Asn275 each coordinate NADP(+).

It belongs to the aldo/keto reductase family.

The protein localises to the cytoplasm. It is found in the cytosol. Its subcellular location is the apical cell membrane. The catalysed reaction is a primary alcohol + NADP(+) = an aldehyde + NADPH + H(+). The enzyme catalyses S-nitroso-CoA + NADPH + H(+) = sulfinamide-CoA + NADP(+). It carries out the reaction S-nitrosoglutathione + NADPH + H(+) = S-(hydroxysulfenamide)glutathione + NADP(+). In terms of biological role, catalyzes the NADPH-dependent reduction of a wide variety of carbonyl-containing compounds to their corresponding alcohols. Displays enzymatic activity towards endogenous metabolites such as aromatic and aliphatic aldehydes, ketones, monosaccharides and bile acids. Acts as an aldehyde-detoxification enzyme. Also acts as an inhibitor of protein S-nitrosylation by mediating degradation of S-nitroso-coenzyme A (S-nitroso-CoA), a cofactor required to S-nitrosylate proteins. Also acts as a S-nitroso-glutathione reductase by catalyzing the NADPH-dependent reduction of S-nitrosoglutathione. Displays no reductase activity towards retinoids. This chain is Aldo-keto reductase family 1 member A1 (AKR1A1), found in Gallus gallus (Chicken).